We begin with the raw amino-acid sequence, 351 residues long: Photosystem II D2 protein (351 aa).

Residues 39-59 (TAYLAAGGWFTGTTFVTSWYT) form a helical membrane-spanning segment. Chlorophyll a is bound at residue H116. Residues 123-139 (GFCLRQFEIARLVGIRP) traverse the membrane as a helical segment. Positions 128 and 141 each coordinate pheophytin a. A helical membrane pass occupies residues 151–164 (VFVSVFLLYPLGQA). H196 contributes to the chlorophyll a binding site. A helical membrane pass occupies residues 206-226 (GALLCAIHGATVENTLFEDGD). Positions 213 and 260 each coordinate a plastoquinone. H213 contributes to the Fe cation binding site. Position 267 (H267) interacts with Fe cation. The helical transmembrane segment at 277–293 (GLWTSSIGIVGLALNLR) threads the bilayer.

It belongs to the reaction center PufL/M/PsbA/D family. PSII is composed of 1 copy each of membrane proteins PsbA, PsbB, PsbC, PsbD, PsbE, PsbF, PsbH, PsbI, PsbJ, PsbK, PsbL, PsbM, PsbT, PsbX, PsbY, PsbZ, Psb30/Ycf12, at least 3 peripheral proteins of the oxygen-evolving complex and a large number of cofactors. It forms dimeric complexes. The D1/D2 heterodimer binds P680, chlorophylls that are the primary electron donor of PSII, and subsequent electron acceptors. It shares a non-heme iron and each subunit binds pheophytin, quinone, additional chlorophylls, carotenoids and lipids. There is also a Cl(-1) ion associated with D1 and D2, which is required for oxygen evolution. The PSII complex binds additional chlorophylls, carotenoids and specific lipids. is required as a cofactor.

The protein localises to the plastid. The protein resides in the chloroplast thylakoid membrane. The catalysed reaction is 2 a plastoquinone + 4 hnu + 2 H2O = 2 a plastoquinol + O2. Its function is as follows. Photosystem II (PSII) is a light-driven water:plastoquinone oxidoreductase that uses light energy to abstract electrons from H(2)O, generating O(2) and a proton gradient subsequently used for ATP formation. It consists of a core antenna complex that captures photons, and an electron transfer chain that converts photonic excitation into a charge separation. The D1/D2 (PsbA/PsbD) reaction center heterodimer binds P680, the primary electron donor of PSII as well as several subsequent electron acceptors. D2 is needed for assembly of a stable PSII complex. This Thalassiosira pseudonana (Marine diatom) protein is Photosystem II D2 protein.